Consider the following 227-residue polypeptide: MSQLFYKGEALLLPQTLHIRHLGQQDYQTVWHAMQAYTDNRGADSQDELWIVEHTPVFTQGQAGKSEHILNPGDIPVIQVDRGGQVTYHGPGQLVAYPLIDIKRAKLGVRQLVNHIEQSIIDMLSPYDIKAYAKTDAPGVYVDERKIASLGLRIRKGCSFHGLALNVDMDLAPFRRINPCGYAGLEMVQSKALNGPQSVVEAGDKLIDTFTKTLGYQEVIHHQGLAE.

Positions 43 to 218 constitute a BPL/LPL catalytic domain; the sequence is ADSQDELWIV…TFTKTLGYQE (176 aa). Residues 82-89, 149-151, and 162-164 contribute to the substrate site; these read RGGQVTYH, SLG, and GLA. The active-site Acyl-thioester intermediate is the Cys180.

This sequence belongs to the LipB family.

Its subcellular location is the cytoplasm. The enzyme catalyses octanoyl-[ACP] + L-lysyl-[protein] = N(6)-octanoyl-L-lysyl-[protein] + holo-[ACP] + H(+). It participates in protein modification; protein lipoylation via endogenous pathway; protein N(6)-(lipoyl)lysine from octanoyl-[acyl-carrier-protein]: step 1/2. Functionally, catalyzes the transfer of endogenously produced octanoic acid from octanoyl-acyl-carrier-protein onto the lipoyl domains of lipoate-dependent enzymes. Lipoyl-ACP can also act as a substrate although octanoyl-ACP is likely to be the physiological substrate. The sequence is that of Octanoyltransferase from Shewanella denitrificans (strain OS217 / ATCC BAA-1090 / DSM 15013).